A 65-amino-acid chain; its full sequence is Keratin-associated protein 23-1 (65 aa).

As to quaternary structure, interacts with hair keratins.

Its function is as follows. In the hair cortex, hair keratin intermediate filaments are embedded in an interfilamentous matrix, consisting of hair keratin-associated proteins (KRTAP), which are essential for the formation of a rigid and resistant hair shaft through their extensive disulfide bond cross-linking with abundant cysteine residues of hair keratins. The matrix proteins include the high-sulfur and high-glycine-tyrosine keratins. In Homo sapiens (Human), this protein is Keratin-associated protein 23-1 (KRTAP23-1).